A 113-amino-acid polypeptide reads, in one-letter code: MNYASFIIKIIKKPKQSFFEKEISLTEISGKLYQIRNKKKIEIPVSLSLWGNLAYDTMQYYHINDYVIVEGYVSLRDKISSGYQIPVDKHIEVSGFKIYPFLLDSIQLTKMDK.

In terms of domain architecture, SSB spans 1-101 (MNYASFIIKI…EVSGFKIYPF (101 aa)).

It localises to the plastid. It is found in the chloroplast. This Trieres chinensis (Marine centric diatom) protein is Putative single-stranded DNA-binding protein ycf41 (ycf41).